The chain runs to 112 residues: Large ribosomal subunit protein uL18 (112 aa).

This sequence belongs to the universal ribosomal protein uL18 family. Part of the 50S ribosomal subunit; part of the 5S rRNA/L5/L18/L25 subcomplex. Contacts the 5S and 23S rRNAs.

Functionally, this is one of the proteins that bind and probably mediate the attachment of the 5S RNA into the large ribosomal subunit, where it forms part of the central protuberance. This is Large ribosomal subunit protein uL18 from Deinococcus deserti (strain DSM 17065 / CIP 109153 / LMG 22923 / VCD115).